The primary structure comprises 146 residues: DNA-binding protein Rv2175c (146 aa).

The disordered stretch occupies residues 1–27; sequence MPGRAPGSTLARVGSIPAGDDVLDPDE. Thr9 carries the phosphothreonine modification.

As to quaternary structure, monomer in solution. May form homodimers. Interacts with phosphorylated PknL. In terms of processing, phosphorylated by PknL. Phosphorylation negatively regulates DNA-binding activity.

Binds DNA at low salt concentrations. This Mycobacterium tuberculosis (strain ATCC 25618 / H37Rv) protein is DNA-binding protein Rv2175c.